Reading from the N-terminus, the 692-residue chain is UvrABC system protein C (692 aa).

The GIY-YIG domain occupies 16-95 (ETPGVYRFRD…IKEFDPRFNV (80 aa)). The region spanning 208 to 243 (GRYLRRLEREMRAAAEAQEYERAARLRDDIGALRRA) is the UVR domain. The disordered stretch occupies residues 492–511 (GELEEYPGAPTGDDEAPETG).

This sequence belongs to the UvrC family. Interacts with UvrB in an incision complex.

Its subcellular location is the cytoplasm. The UvrABC repair system catalyzes the recognition and processing of DNA lesions. UvrC both incises the 5' and 3' sides of the lesion. The N-terminal half is responsible for the 3' incision and the C-terminal half is responsible for the 5' incision. The polypeptide is UvrABC system protein C (Parafrankia sp. (strain EAN1pec)).